A 40-amino-acid polypeptide reads, in one-letter code: Photosystem II reaction center protein J (40 aa).

The helical transmembrane segment at 8 to 28 threads the bilayer; that stretch reads IPLWVIGTVAGILVIGIIGIF.

The protein belongs to the PsbJ family. In terms of assembly, PSII is composed of 1 copy each of membrane proteins PsbA, PsbB, PsbC, PsbD, PsbE, PsbF, PsbH, PsbI, PsbJ, PsbK, PsbL, PsbM, PsbT, PsbX, PsbY, PsbZ, Psb30/Ycf12, at least 3 peripheral proteins of the oxygen-evolving complex and a large number of cofactors. It forms dimeric complexes.

It is found in the plastid. The protein localises to the chloroplast thylakoid membrane. Functionally, one of the components of the core complex of photosystem II (PSII). PSII is a light-driven water:plastoquinone oxidoreductase that uses light energy to abstract electrons from H(2)O, generating O(2) and a proton gradient subsequently used for ATP formation. It consists of a core antenna complex that captures photons, and an electron transfer chain that converts photonic excitation into a charge separation. In Lobularia maritima (Sweet alyssum), this protein is Photosystem II reaction center protein J.